The following is a 298-amino-acid chain: MERLTLPLGGAAAVDEYLEYRRIVGEDDGGKLFTPEEYEEYKRKVLPLRLQNRLFVSWRSPTGMDCKLVGPETLCFCTHRYKQHKTDLEAIPQQCPIDLPCQVTGCQCRAYLYVPLNGSQPIRCRCKHFADQHSAAPGFTCNTCSKCSGFHSCFTCACGQPAYAHDTVVETKQERLAQEKPVGQDIPYAAMGGLTGFSSLAEGYMRLDDSGIGVPSVEFLESPITAVDSPFLKAFQASSSSSPETLTDVGTSSQVSSLRRPEEDDMAFFERRYQERMKMEKAAKWKGKAPLPSATKPS.

Positions Ser-241 to Ser-257 are enriched in polar residues. A disordered region spans residues Ser-241–Glu-263.

The protein belongs to the FAM221 family.

This Homo sapiens (Human) protein is Protein FAM221A (FAM221A).